We begin with the raw amino-acid sequence, 219 residues long: Probable GTP-binding protein EngB (219 aa).

The 175-residue stretch at Val-31–Pro-205 folds into the EngB-type G domain. GTP is bound by residues Gly-39–Ser-46, Gly-66–Leu-70, Asp-84–Gly-87, Thr-151–Asp-154, and Phe-184–Ala-186. Mg(2+) is bound by residues Ser-46 and Thr-68.

This sequence belongs to the TRAFAC class TrmE-Era-EngA-EngB-Septin-like GTPase superfamily. EngB GTPase family. Mg(2+) is required as a cofactor.

Necessary for normal cell division and for the maintenance of normal septation. This Shewanella putrefaciens (strain CN-32 / ATCC BAA-453) protein is Probable GTP-binding protein EngB.